We begin with the raw amino-acid sequence, 46 residues long: Defensin-like protein 2 (46 aa).

4 disulfide bridges follow: cysteine 3/cysteine 46, cysteine 13/cysteine 33, cysteine 19/cysteine 40, and cysteine 23/cysteine 42.

As to quaternary structure, monomer. Present in seeds, cotyledons and leaves. Not found in roots or stems.

In terms of biological role, has antibacterial activity against the Gram-positive bacterium S.aureus and the Gram-negative bacteria E.coli and P.syringae. Does not have antibacterial activity against the phytopathogenic bacteria R.solanacearum, Rhataybacter sp and Erwinia sp. Does not inhibit trypsin, chymotrypsin or alpha-amylases. The polypeptide is Defensin-like protein 2 (Vigna unguiculata (Cowpea)).